The primary structure comprises 341 residues: Elongation factor Ts (341 aa).

Residues threonine 80–valine 83 are involved in Mg(2+) ion dislocation from EF-Tu.

This sequence belongs to the EF-Ts family.

It localises to the cytoplasm. Associates with the EF-Tu.GDP complex and induces the exchange of GDP to GTP. It remains bound to the aminoacyl-tRNA.EF-Tu.GTP complex up to the GTP hydrolysis stage on the ribosome. In Lactobacillus johnsonii (strain CNCM I-12250 / La1 / NCC 533), this protein is Elongation factor Ts.